Reading from the N-terminus, the 426-residue chain is FK506-binding protein 3 (426 aa).

Disordered regions lie at residues 37–143 and 171–314; these read SLDP…PKHQ and TGNY…KKKK. 3 stretches are compositionally biased toward acidic residues: residues 65–94, 111–131, and 181–225; these read DYFE…EAEE, EDEE…DDVS, and QDEE…SEEE. 3 stretches are compositionally biased toward basic and acidic residues: residues 226–257, 264–278, and 287–311; these read GTPK…ESTS, KKDE…KELE, and VEKD…DGDK. One can recognise a PPIase FKBP-type domain in the interval 340–426; the sequence is GAKVGIRYIG…TFDIKLVSLK (87 aa).

The protein belongs to the FKBP-type PPIase family. FKBP3/4 subfamily.

Its subcellular location is the nucleus. It localises to the nucleolus. The catalysed reaction is [protein]-peptidylproline (omega=180) = [protein]-peptidylproline (omega=0). Its activity is regulated as follows. Inhibited by both FK506 and rapamycin. Functionally, PPIases accelerate the folding of proteins. It catalyzes the cis-trans isomerization of proline imidic peptide bonds in oligopeptides. The polypeptide is FK506-binding protein 3 (FPR3) (Candida albicans (strain SC5314 / ATCC MYA-2876) (Yeast)).